The primary structure comprises 191 residues: Fe/S biogenesis protein NfuA (191 aa).

Residues cysteine 149 and cysteine 152 each coordinate [4Fe-4S] cluster.

Belongs to the NfuA family. Homodimer. [4Fe-4S] cluster is required as a cofactor.

Its function is as follows. Involved in iron-sulfur cluster biogenesis. Binds a 4Fe-4S cluster, can transfer this cluster to apoproteins, and thereby intervenes in the maturation of Fe/S proteins. Could also act as a scaffold/chaperone for damaged Fe/S proteins. The polypeptide is Fe/S biogenesis protein NfuA (Salmonella arizonae (strain ATCC BAA-731 / CDC346-86 / RSK2980)).